The primary structure comprises 211 residues: Cytochrome c biogenesis ATP-binding export protein CcmA 2 (211 aa).

The ABC transporter domain occupies 6–208; the sequence is LEARELGVRR…GAVLDLATDA (203 aa). 38–45 lines the ATP pocket; sequence GPNGAGKT.

This sequence belongs to the ABC transporter superfamily. CcmA exporter (TC 3.A.1.107) family. In terms of assembly, the complex is composed of two ATP-binding proteins (CcmA) and two transmembrane proteins (CcmB).

It is found in the cell inner membrane. It catalyses the reaction heme b(in) + ATP + H2O = heme b(out) + ADP + phosphate + H(+). Its function is as follows. Part of the ABC transporter complex CcmAB involved in the biogenesis of c-type cytochromes; once thought to export heme, this seems not to be the case, but its exact role is uncertain. Responsible for energy coupling to the transport system. The polypeptide is Cytochrome c biogenesis ATP-binding export protein CcmA 2 (Cupriavidus metallidurans (strain ATCC 43123 / DSM 2839 / NBRC 102507 / CH34) (Ralstonia metallidurans)).